A 65-amino-acid polypeptide reads, in one-letter code: Large ribosomal subunit protein bL35 (65 aa).

This sequence belongs to the bacterial ribosomal protein bL35 family.

The chain is Large ribosomal subunit protein bL35 from Desulforapulum autotrophicum (strain ATCC 43914 / DSM 3382 / VKM B-1955 / HRM2) (Desulfobacterium autotrophicum).